Here is a 90-residue protein sequence, read N- to C-terminus: Protein LIM1 (90 aa).

The first 26 residues, 1 to 26 (MASMKSLATAILVVLLLAALSREGRS), serve as a signal peptide directing secretion. Cystine bridges form between Cys29-Cys66, Cys39-Cys55, Cys56-Cys81, and Cys68-Cys88.

Belongs to the A9/FIL1 family.

It is found in the secreted. The protein is Protein LIM1 (LIM1) of Lilium longiflorum (Trumpet lily).